A 272-amino-acid polypeptide reads, in one-letter code: Putative phosphoenolpyruvate synthase regulatory protein (272 aa).

Residue 152–159 (GVSRCGKT) coordinates ADP.

It belongs to the pyruvate, phosphate/water dikinase regulatory protein family. PSRP subfamily.

It carries out the reaction [pyruvate, water dikinase] + ADP = [pyruvate, water dikinase]-phosphate + AMP + H(+). The catalysed reaction is [pyruvate, water dikinase]-phosphate + phosphate + H(+) = [pyruvate, water dikinase] + diphosphate. Bifunctional serine/threonine kinase and phosphorylase involved in the regulation of the phosphoenolpyruvate synthase (PEPS) by catalyzing its phosphorylation/dephosphorylation. This Stutzerimonas stutzeri (strain A1501) (Pseudomonas stutzeri) protein is Putative phosphoenolpyruvate synthase regulatory protein.